The following is a 154-amino-acid chain: 17 kDa surface antigen (154 aa).

A signal peptide spans 1–19 (MKLLSKIMIIALAASMLQA). Cys20 carries the N-palmitoyl cysteine lipid modification. Cys20 carries the S-diacylglycerol cysteine lipid modification.

Belongs to the rickettsiale 17 kDa surface antigen family.

It localises to the cell outer membrane. In Rickettsia australis, this protein is 17 kDa surface antigen (omp).